A 788-amino-acid chain; its full sequence is Structure-specific endonuclease subunit SLX4 (788 aa).

3 disordered regions span residues L59–R86, K562–S584, and D599–P622. Basic and acidic residues predominate over residues K562 to R573. Positions D612–P622 are enriched in polar residues.

Belongs to the SLX4 family. Forms a heterodimer with SLX1. Post-translationally, phosphorylated in response to DNA damage.

It is found in the nucleus. Its function is as follows. Regulatory subunit of the SLX1-SLX4 structure-specific endonuclease that resolves DNA secondary structures generated during DNA repair and recombination. Has endonuclease activity towards branched DNA substrates, introducing single-strand cuts in duplex DNA close to junctions with ss-DNA. The polypeptide is Structure-specific endonuclease subunit SLX4 (Debaryomyces hansenii (strain ATCC 36239 / CBS 767 / BCRC 21394 / JCM 1990 / NBRC 0083 / IGC 2968) (Yeast)).